Reading from the N-terminus, the 437-residue chain is Zinc finger protein 491 (437 aa).

The segment at 35–59 (KSCESGTCGEIFMGYSSFNRNIRTD) adopts a C2H2-type 1; degenerate zinc-finger fold. The C2H2-type 2; degenerate zinc-finger motif lies at 103 to 125 (FDCKECEKSFISPASIRRYMVTH). C2H2-type zinc fingers lie at residues 131–153 (YKCK…ERTH), 159–181 (YECK…ERTH), 187–209 (YECK…ERTH), 215–237 (YKCK…ERTH), 243–265 (YECK…MRMH), 271–293 (HKCK…ERSH), 299–321 (YKCK…ERTH), 327–349 (DGCK…GRTH), 355–377 (YECK…ERTH), 383–405 (YECK…ERIH), and 411–433 (YQCK…ERTH).

Belongs to the krueppel C2H2-type zinc-finger protein family.

Its subcellular location is the nucleus. In terms of biological role, may be involved in transcriptional regulation. This chain is Zinc finger protein 491 (ZNF491), found in Homo sapiens (Human).